A 347-amino-acid polypeptide reads, in one-letter code: UPF0284 protein M164_0030 (347 aa).

It belongs to the UPF0284 family.

This chain is UPF0284 protein M164_0030, found in Saccharolobus islandicus (strain M.16.4 / Kamchatka #3) (Sulfolobus islandicus).